The primary structure comprises 199 residues: Small ribosomal subunit protein uS4 (199 aa).

The S4 RNA-binding domain occupies 94 to 157 (SRLDNLVYRA…RKLKLVQEAL (64 aa)).

Belongs to the universal ribosomal protein uS4 family. In terms of assembly, part of the 30S ribosomal subunit. Contacts protein S5. The interaction surface between S4 and S5 is involved in control of translational fidelity.

Its function is as follows. One of the primary rRNA binding proteins, it binds directly to 16S rRNA where it nucleates assembly of the body of the 30S subunit. Functionally, with S5 and S12 plays an important role in translational accuracy. The protein is Small ribosomal subunit protein uS4 of Mycoplasmopsis synoviae (strain 53) (Mycoplasma synoviae).